Here is a 66-residue protein sequence, read N- to C-terminus: Disintegrin EO5B (66 aa).

Positions 1–65 constitute a Disintegrin domain; it reads NSAHPCCDPV…DCPRNPYKGK (65 aa). 4 disulfide bridges follow: cysteine 6–cysteine 29, cysteine 20–cysteine 26, cysteine 25–cysteine 50, and cysteine 38–cysteine 57. A Cell attachment site; atypical (VGD) motif is present at residues 42–44; sequence VGD.

The protein belongs to the disintegrin family. Dimeric disintegrin subfamily. Heterodimer with EO4A or EO5A; disulfide-linked. In terms of tissue distribution, expressed by the venom gland.

The protein localises to the secreted. Its function is as follows. Poor inhibitor of platelet aggregation. When it dimerizes with EO4A, it inhibits the adhesion of cells expressing the RGD-dependent integrin alpha-5/beta-1 (ITGA5/ITGB1) to immobilized fibronectin. When it dimerizes with EO5A, it inhibits the adhesion of the alpha-4/beta-1 (ITGA4/ITGB1) integrin to VCAM-1. When it dimerizes either with EO4A or EO5A, the inhibition on alpha-IIb/beta-3 (ITGA2B/ITGB3) is low. In Echis ocellatus (Ocellated saw-scaled viper), this protein is Disintegrin EO5B.